Reading from the N-terminus, the 257-residue chain is Aspartate/glutamate leucyltransferase (257 aa).

The protein belongs to the R-transferase family. Bpt subfamily.

The protein localises to the cytoplasm. It catalyses the reaction N-terminal L-glutamyl-[protein] + L-leucyl-tRNA(Leu) = N-terminal L-leucyl-L-glutamyl-[protein] + tRNA(Leu) + H(+). It carries out the reaction N-terminal L-aspartyl-[protein] + L-leucyl-tRNA(Leu) = N-terminal L-leucyl-L-aspartyl-[protein] + tRNA(Leu) + H(+). Functionally, functions in the N-end rule pathway of protein degradation where it conjugates Leu from its aminoacyl-tRNA to the N-termini of proteins containing an N-terminal aspartate or glutamate. The sequence is that of Aspartate/glutamate leucyltransferase from Phenylobacterium zucineum (strain HLK1).